The following is a 299-amino-acid chain: MASLKDLRSRITSVKSTQKITSAMKMVAASRLRRAQDTAEAARPYTQRMERMLGNLAASTAGMAGASPLLGGTGKDNVHLIVALTANRGLCGGFNGSIIRATRTLVRELEAQGKTVKLLCIGKKGRDGLKREFPKQIIGGIADQSSKAIGFSDADRFSRLILDMFQAGEFDVCTLVYNRFQSAISQVVTRQQIIPFAVPTTVAAGNDNDRTAGPKAIYEYEPSEEEILADLLPKNVAIQVFRGMLESFASEQGARMTAMDNATRNAGDMIKKLSLTYNRTRQAQITKELIEIISGAEAI.

This sequence belongs to the ATPase gamma chain family. As to quaternary structure, F-type ATPases have 2 components, CF(1) - the catalytic core - and CF(0) - the membrane proton channel. CF(1) has five subunits: alpha(3), beta(3), gamma(1), delta(1), epsilon(1). CF(0) has three main subunits: a, b and c.

Its subcellular location is the cell inner membrane. Functionally, produces ATP from ADP in the presence of a proton gradient across the membrane. The gamma chain is believed to be important in regulating ATPase activity and the flow of protons through the CF(0) complex. This is ATP synthase gamma chain from Rhodospirillum rubrum.